A 185-amino-acid chain; its full sequence is Ribosome-recycling factor (185 aa).

It belongs to the RRF family.

It is found in the cytoplasm. Its function is as follows. Responsible for the release of ribosomes from messenger RNA at the termination of protein biosynthesis. May increase the efficiency of translation by recycling ribosomes from one round of translation to another. The polypeptide is Ribosome-recycling factor (Shewanella oneidensis (strain ATCC 700550 / JCM 31522 / CIP 106686 / LMG 19005 / NCIMB 14063 / MR-1)).